Here is a 373-residue protein sequence, read N- to C-terminus: Cathecol O-methyltransferase 1 (373 aa).

Residues Gly209, Asp232, Asp252, Met253, Met265, and Lys266 each contribute to the S-adenosyl-L-homocysteine site. Asp232 serves as a coordination point for S-adenosyl-L-methionine. His279 acts as the Proton acceptor in catalysis.

It belongs to the class I-like SAM-binding methyltransferase superfamily. Cation-independent O-methyltransferase family. COMT subfamily.

The enzyme catalyses catechol + S-adenosyl-L-methionine = guaiacol + S-adenosyl-L-homocysteine + H(+). Functionally, O-methyltransferase that catalyzes the conversion of catechol to guaiacol. Involved in the production of guaiacol in fruits. This is Cathecol O-methyltransferase 1 from Solanum lycopersicum (Tomato).